A 350-amino-acid polypeptide reads, in one-letter code: Histidinol-phosphate aminotransferase (350 aa).

At Lys-209 the chain carries N6-(pyridoxal phosphate)lysine.

Belongs to the class-II pyridoxal-phosphate-dependent aminotransferase family. Histidinol-phosphate aminotransferase subfamily. As to quaternary structure, homodimer. Pyridoxal 5'-phosphate is required as a cofactor.

It carries out the reaction L-histidinol phosphate + 2-oxoglutarate = 3-(imidazol-4-yl)-2-oxopropyl phosphate + L-glutamate. It participates in amino-acid biosynthesis; L-histidine biosynthesis; L-histidine from 5-phospho-alpha-D-ribose 1-diphosphate: step 7/9. The polypeptide is Histidinol-phosphate aminotransferase (Citrifermentans bemidjiense (strain ATCC BAA-1014 / DSM 16622 / JCM 12645 / Bem) (Geobacter bemidjiensis)).